A 108-amino-acid polypeptide reads, in one-letter code: Protein SMALL AUXIN UP-REGULATED RNA 8 (108 aa).

It belongs to the ARG7 family. In terms of tissue distribution, expressed in seedlings, leaves and flowers.

It is found in the cell membrane. Functionally, provide a mechanistic link between auxin and plasma membrane H(+)-ATPases (PM H(+)-ATPases, e.g. AHA1 and AHA2), and triggers PM H(+)-ATPases activity by promoting phosphorylation of their C-terminal autoinhibitory domain as a result of PP2C-D subfamily of type 2C phosphatases inhibition, thus leading to the acidification of the apoplast and the facilitation of solutes and water uptake to drive cell expansion. Triggers plant growth probably by promoting cell elongation. Regulates branch angles and bending. The protein is Protein SMALL AUXIN UP-REGULATED RNA 8 of Arabidopsis thaliana (Mouse-ear cress).